We begin with the raw amino-acid sequence, 99 residues long: Plastocyanin (99 aa).

A Plastocyanin-like domain is found at 1 to 99 (AEVLLGSSDG…AGMVGKVTVN (99 aa)). Cu cation is bound by residues histidine 37, cysteine 84, histidine 87, and methionine 92.

Belongs to the plastocyanin family. Cu(2+) is required as a cofactor.

The protein resides in the plastid. Its subcellular location is the chloroplast thylakoid membrane. Functionally, participates in electron transfer between P700 and the cytochrome b6-f complex in photosystem I. The sequence is that of Plastocyanin (PETE) from Lactuca sativa (Garden lettuce).